The primary structure comprises 440 residues: Xaa-Pro dipeptidase (440 aa).

Mn(2+) is bound by residues D244, D255, H335, E380, and E419.

This sequence belongs to the peptidase M24B family. Bacterial-type prolidase subfamily. Mn(2+) is required as a cofactor.

The enzyme catalyses Xaa-L-Pro dipeptide + H2O = an L-alpha-amino acid + L-proline. Its function is as follows. Splits dipeptides with a prolyl residue in the C-terminal position. In Shewanella denitrificans (strain OS217 / ATCC BAA-1090 / DSM 15013), this protein is Xaa-Pro dipeptidase.